The following is a 322-amino-acid chain: Protein SEC13 homolog (322 aa).

Val2 is subject to N-acetylvaline. WD repeat units lie at residues 11 to 50 (SHED…QILI), 55 to 96 (GHEG…WEKS), 101 to 144 (GHDS…EVKK), 148 to 204 (AHTI…QWKE), 210 to 253 (AHSD…SNTW), and 260 to 299 (KFND…QWVC). Ser184 carries the phosphoserine modification. The residue at position 309 (Ser309) is a Phosphoserine.

Belongs to the WD repeat SEC13 family. As to quaternary structure, at the nuclear pore: component of the Y-shaped Nup107-160 subcomplex of the nuclear pore complex (NPC). The Nup107-160 subcomplex includes NUP160, NUP133, NUP107, NUP98, NUP85, NUP43, NUP37, SEH1 and SEC13. At the COPII coat complex: interacts with SEC31A and SEC31B. Interacts with SEC16A. Interacts with SEC16B. Component of the GATOR2 subcomplex, composed of MIOS, SEC13, SEH1L, WDR24 and WDR59. The GATOR2 complex interacts with CASTOR1 and CASTOR2; the interaction is negatively regulated by arginine. The GATOR2 complex interacts with SESN1, SESN2 and SESN3; the interaction is negatively regulated by amino acids.

Its subcellular location is the cytoplasmic vesicle. The protein localises to the COPII-coated vesicle membrane. It localises to the endoplasmic reticulum membrane. It is found in the nucleus. The protein resides in the nuclear pore complex. Its subcellular location is the lysosome membrane. The GATOR2 complex is negatively regulated by the upstream amino acid sensors CASTOR1 and SESN2, which sequester the GATOR2 complex in absence of amino acids. In the presence of abundant amino acids, GATOR2 is released from CASTOR1 and SESN2 and activated. Its function is as follows. Functions as a component of the nuclear pore complex (NPC) and the COPII coat. At the endoplasmic reticulum, SEC13 is involved in the biogenesis of COPII-coated vesicles. Required for the exit of adipsin (CFD/ADN), an adipocyte-secreted protein from the endoplasmic reticulum. Functionally, as a component of the GATOR2 complex, functions as an activator of the amino acid-sensing branch of the mTORC1 signaling pathway. The GATOR2 complex indirectly activates mTORC1 through the inhibition of the GATOR1 subcomplex. GATOR2 probably acts as an E3 ubiquitin-protein ligase toward GATOR1. In the presence of abundant amino acids, the GATOR2 complex mediates ubiquitination of the NPRL2 core component of the GATOR1 complex, leading to GATOR1 inactivation. In the absence of amino acids, GATOR2 is inhibited, activating the GATOR1 complex. Within the GATOR2 complex, SEC13 and SEH1L are required to stabilize the complex. This chain is Protein SEC13 homolog, found in Homo sapiens (Human).